Reading from the N-terminus, the 347-residue chain is Anthranilate phosphoribosyltransferase (347 aa).

Residues Gly88, 91–92 (GD), Thr96, 98–101 (NIST), 116–124 (KHGNRSVSS), and Ser128 contribute to the 5-phospho-alpha-D-ribose 1-diphosphate site. Gly88 is an anthranilate binding site. Ser100 contributes to the Mg(2+) binding site. Asn119 contacts anthranilate. Position 174 (Arg174) interacts with anthranilate. The Mg(2+) site is built by Asp232 and Glu233.

The protein belongs to the anthranilate phosphoribosyltransferase family. As to quaternary structure, homodimer. Requires Mg(2+) as cofactor.

It catalyses the reaction N-(5-phospho-beta-D-ribosyl)anthranilate + diphosphate = 5-phospho-alpha-D-ribose 1-diphosphate + anthranilate. It participates in amino-acid biosynthesis; L-tryptophan biosynthesis; L-tryptophan from chorismate: step 2/5. Its function is as follows. Catalyzes the transfer of the phosphoribosyl group of 5-phosphorylribose-1-pyrophosphate (PRPP) to anthranilate to yield N-(5'-phosphoribosyl)-anthranilate (PRA). The sequence is that of Anthranilate phosphoribosyltransferase from Shewanella sp. (strain ANA-3).